Consider the following 377-residue polypeptide: Probable tRNA pseudouridine synthase D (377 aa).

The active-site Nucleophile is aspartate 89. Positions 160 to 377 (YLPAFIGYQR…ILRGDPRKFT (218 aa)) constitute a TRUD domain.

The protein belongs to the pseudouridine synthase TruD family.

It carries out the reaction uridine(13) in tRNA = pseudouridine(13) in tRNA. Its function is as follows. Could be responsible for synthesis of pseudouridine from uracil-13 in transfer RNAs. In Saccharolobus solfataricus (strain ATCC 35092 / DSM 1617 / JCM 11322 / P2) (Sulfolobus solfataricus), this protein is Probable tRNA pseudouridine synthase D.